The sequence spans 127 residues: Apolipoprotein C-IV (127 aa).

Residues methionine 1 to cysteine 27 form the signal peptide. Asparagine 63 carries an N-linked (GlcNAc...) asparagine glycan.

It belongs to the apolipoprotein C4 family.

It is found in the secreted. Its function is as follows. May participate in lipoprotein metabolism. In Colobus guereza (Mantled guereza), this protein is Apolipoprotein C-IV (APOC4).